Here is a 533-residue protein sequence, read N- to C-terminus: Neuropilin and tolloid-like protein 1 (533 aa).

The N-terminal stretch at 1–22 (MIYGRSLFHIIASLIILHSSGA) is a signal peptide. The Extracellular portion of the chain corresponds to 23–344 (TKKGTEKQIT…LDQLTNTSGT (322 aa)). Cystine bridges form between Cys41–Cys68, Cys96–Cys118, Cys172–Cys202, Cys229–Cys251, Cys292–Cys304, Cys299–Cys317, and Cys311–Cys326. CUB domains are found at residues 41–155 (CGTW…YNFT) and 172–287 (CEFE…FTSF). Positions 291–327 (PCEGNTFFCHSNMCINNTLVCNGLQNCVYPWDENHCK) constitute an LDL-receptor class A domain. N-linked (GlcNAc...) asparagine glycosylation is present at Asn306. Asn340 is a glycosylation site (N-linked (GlcNAc...) asparagine). A helical transmembrane segment spans residues 345–365 (VIGVTSCIVIILIIVSVIVQI). Over 366–533 (KQPRKKYVQR…HESEYNTTRV (168 aa)) the chain is Cytoplasmic. Tyr417 carries the post-translational modification Phosphotyrosine. The PDZ-binding signature appears at 531 to 533 (TRV).

As to quaternary structure, interacts with PLZ domains of DLG2, DLG3 and DLG4 via its C-terminal TRV domain. Interacts with GRIN2A and GRIN2B via its CUB domains. Expressed only in brain. Present throughout the central nervous system. Highly expressed in the hippocampal CA3 region, olfactory bulb and tubercle, caudate putamen, and neocortex in the adult brain.

The protein resides in the membrane. It localises to the postsynaptic density membrane. Functionally, involved in the development and/or maintenance of neuronal circuitry. Accessory subunit of the neuronal N-methyl-D-aspartate receptor (NMDAR) critical for maintaining the abundance of GRIN2A-containing NMDARs in the postsynaptic density. Regulates long-term NMDA receptor-dependent synaptic plasticity and cognition, at least in the context of spatial learning and memory. This Mus musculus (Mouse) protein is Neuropilin and tolloid-like protein 1 (Neto1).